A 747-amino-acid polypeptide reads, in one-letter code: DNA ligase 1 (747 aa).

Positions 1–84 (MQKSITSFFK…KEVDDKTTDK (84 aa)) are disordered. Ser18, Ser20, Ser42, Ser44, Ser46, Ser60, and Ser65 each carry phosphoserine. Residues 26-42 (PKIDAKTELPDEPHIKS) are compositionally biased toward basic and acidic residues. Basic and acidic residues predominate over residues 60-84 (SEEKTSPVKNVKKEPKEVDDKTTDK). Lys395 (N6-AMP-lysine intermediate) is an active-site residue. Residues 725 to 740 (QSQDQVKNNQKSSTQM) show a composition bias toward polar residues. Residues 725-747 (QSQDQVKNNQKSSTQMEMEDEFY) are disordered.

Belongs to the ATP-dependent DNA ligase family.

Its subcellular location is the nucleus. The enzyme catalyses ATP + (deoxyribonucleotide)n-3'-hydroxyl + 5'-phospho-(deoxyribonucleotide)m = (deoxyribonucleotide)n+m + AMP + diphosphate.. Its function is as follows. DNA ligase that seals nicks in double-stranded DNA during DNA replication, DNA recombination and DNA repair. The sequence is that of DNA ligase 1 from Drosophila melanogaster (Fruit fly).